Here is a 343-residue protein sequence, read N- to C-terminus: Heat-inducible transcription repressor HrcA (343 aa).

It belongs to the HrcA family.

In terms of biological role, negative regulator of class I heat shock genes (grpE-dnaK-dnaJ and groELS operons). Prevents heat-shock induction of these operons. In Natranaerobius thermophilus (strain ATCC BAA-1301 / DSM 18059 / JW/NM-WN-LF), this protein is Heat-inducible transcription repressor HrcA.